An 85-amino-acid polypeptide reads, in one-letter code: uncharacterized protein (85 aa).

A helical membrane pass occupies residues 39–59; it reads FILFEISMYIIFIVTFCYKII.

The protein resides in the host membrane. This is an uncharacterized protein from Gallid herpesvirus 2 (strain Chicken/Md5/ATCC VR-987) (GaHV-2).